Here is a 3019-residue protein sequence, read N- to C-terminus: Genome polyprotein (3019 aa).

N-acetylserine; by host is present on Ser-2. Residues 2 to 23 (STLPKPQRITKRNINRRPQDVK) are interaction with STAT1. The tract at residues 2 to 58 (STLPKPQRITKRNINRRPQDVKFPGGGQIVGGVYVLPRRGPKLGVRAVRKTSERSQP) is interaction with EIF2AK2/PKR. The segment at 2–59 (STLPKPQRITKRNINRRPQDVKFPGGGQIVGGVYVLPRRGPKLGVRAVRKTSERSQPR) is interaction with DDX3X. Residues 2–75 (STLPKPQRIT…PRARRTEGRS (74 aa)) form a disordered region. The Cytoplasmic segment spans residues 2-168 (STLPKPQRIT…EDGINFATGN (167 aa)). 2 consecutive short sequence motifs (nuclear localization signal) follow at residues 5–13 (PKPQRITKR) and 38–43 (PRRGPK). Ser-53 carries the phosphoserine; by host modification. 2 consecutive short sequence motifs (nuclear localization signal) follow at residues 58 to 64 (PRSRRQP) and 66 to 71 (PRARRT). A compositionally biased stretch (basic residues) spans 58-68 (PRSRRQPIPRA). A phosphoserine; by host mark is found at Ser-99 and Ser-116. The segment at 112-152 (PRRRSRNLGKVIDTLTCGFADLMGYIPLVGAPVGGVARALA) is important for endoplasmic reticulum and mitochondrial localization. The interval 122-173 (VIDTLTCGFADLMGYIPLVGAPVGGVARALAHGVRALEDGINFATGNLPGCS) is interaction with APOA2. Residues 164–167 (FATG) form an important for lipid droplets localization region. Residues 169-189 (LPGCSFSIFLLALLSCLLTPT) form a helical membrane-spanning segment. The propeptide at 178–191 (LLALLSCLLTPTAG) is ER anchor for the core protein, removed in mature form by host signal peptidase. Residues 190–358 (AGLEYRNASG…IGAHWGVMAG (169 aa)) are Lumenal-facing. Residues Asn-196, Asn-209, and Asn-234 are each glycosylated (N-linked (GlcNAc...) asparagine; by host). Residues 265 to 296 (MVGAATLCSALYVGDLCGALFLVGQGFSWRHR) form an important for fusion region. Residue Asn-305 is glycosylated (N-linked (GlcNAc...) asparagine; by host). Residues 359–379 (VAYYSMQGNWAKVFLVLCLFS) traverse the membrane as a helical segment. Over 380-730 (GVDASTTITG…WEFVILIFLL (351 aa)) the chain is Lumenal. Positions 385–412 (TTITGGVAASGAFTITSLFSTGAKQPLH) are HVR1. N-linked (GlcNAc...) (high mannose) asparagine; by host glycans are attached at residues Asn-417, Asn-423, and Asn-430. 4 cysteine pairs are disulfide-bonded: Cys-429–Cys-553, Cys-452–Cys-459, Cys-487–Cys-495, and Cys-504–Cys-509. Asn-448 carries N-linked (GlcNAc...) asparagine; by host glycosylation. Residues 475 to 479 (ANISG) form an HVR2 region. Residue Asn-476 is glycosylated (N-linked (GlcNAc...) asparagine; by host). Residues 481–494 (SSEKPYCWHYAPRP) form a CD81-binding 1 region. Asn-533 carries N-linked (GlcNAc...) asparagine; by host glycosylation. The interval 545-552 (PPTEPWFG) is CD81-binding 2. The N-linked (GlcNAc...) asparagine; by host glycan is linked to Asn-557. 4 cysteine pairs are disulfide-bonded: Cys-565–Cys-570, Cys-586–Cys-590, Cys-602–Cys-625, and Cys-612–Cys-649. Residues Asn-628 and Asn-650 are each glycosylated (N-linked (GlcNAc...) (high mannose) asparagine; by host). An intrachain disulfide couples Cys-657 to Cys-682. Positions 665–676 (SEMYPLLHSTTE) are PKR/eIF2-alpha phosphorylation homology domain (PePHD). Residues 731–751 (LADARVCVVLWMMMLISQAEA) traverse the membrane as a helical segment. Residues 752–762 (ALENLIVLNAI) are Lumenal-facing. Residues 763–783 (SAAGTHGIWWSLVAFCVAWHV) form a helical membrane-spanning segment. At 784-786 (RGR) the chain is on the cytoplasmic side. Residues 787-808 (IFPIAVYSIVGLWPLLLLVLML) form a helical membrane-spanning segment. The Lumenal portion of the chain corresponds to 809–818 (PYRAYAWTGT). The chain crosses the membrane as a helical span at residues 819 to 839 (DTSTLGAGVLSLFALFTLSPW). At 840–843 (YKHW) the chain is on the cytoplasmic side. The helical transmembrane segment at 844 to 863 (IARLIWWNQYTIARCEAALQ) threads the bilayer. Over 864–886 (IWVPPLLARGARDGIILLAGLFY) the chain is Lumenal. A helical membrane pass occupies residues 887-907 (PALVFDITKLLLAILGPLYIL). Residues 908 to 1031 (QASLVRVPYF…DYRSMGWRLL (124 aa)) form the Peptidase C18 domain. Residues 908–1662 (QASLVRVPYF…CMAADLEVAT (755 aa)) lie on the Cytoplasmic side of the membrane. The segment at 909–1211 (ASLVRVPYFV…PVESLSAQTR (303 aa)) is protease NS2-3. The S-palmitoyl cysteine; by host moiety is linked to residue Cys-927. The interaction with host SCPS1 stretch occupies residues 934-954 (TGGKYVQMVLLALARGFNTYL). Active-site for protease NS2 activity; shared with dimeric partner residues include His-957, Glu-977, and Cys-998. Residues 1032 to 1213 (APITAHAQQT…ESLSAQTRSP (182 aa)) enclose the Peptidase S29 domain. Active-site charge relay system; for serine protease NS3 activity residues include His-1088 and Asp-1112. 2 residues coordinate Zn(2+): Cys-1128 and Cys-1130. Ser-1170 serves as the catalytic Charge relay system; for serine protease NS3 activity. Residues Cys-1176 and His-1180 each coordinate Zn(2+). 1235–1242 (APTGSGES) serves as a coordination point for ATP. Mg(2+) is bound by residues Ser-1242 and Glu-1322. Positions 1321–1324 (DECH) match the DECH box motif. The region spanning 1366 to 1543 (NIEEVALTGE…ELTPSETTVR (178 aa)) is the Helicase C-terminal domain. The disordered stretch occupies residues 1482–1505 (VPQDAVSRSQRRGRTGRGKSGTYR). Residues 1491–1503 (QRRGRTGRGKSGT) form an RNA-binding region. A helical membrane pass occupies residues 1663–1683 (SAWVLLGGVMAALTAYCLSVG). The NS3-binding stretch occupies residues 1684-1695 (SVVIVGHLVLGG). Topologically, residues 1684–1810 (SVVIVGHLVL…SVTSPLTTNQ (127 aa)) are cytoplasmic. A helical membrane pass occupies residues 1811–1829 (TLLFNIMGGWVASNLAPPP). The Lumenal segment spans residues 1830-1833 (ASTA). Residues 1834–1854 (FVVSGLAGAAVGSIGLGKVLL) traverse the membrane as a helical segment. Residue Asp-1855 is a topological domain, cytoplasmic. The helical transmembrane segment at 1856-1876 (ILAGYGAGVAGALVAFKIMGG) threads the bilayer. The Lumenal portion of the chain corresponds to 1877–1886 (EMPSTEDMVN). The chain crosses the membrane as a helical span at residues 1887–1907 (LLPAILSPGALVVGVICAAIL). Topologically, residues 1908-1977 (RRHVGPGEGA…WINEDYPTPC (70 aa)) are cytoplasmic. Cys-1977 is lipidated: S-palmitoyl cysteine; by host. An intramembrane segment occupies 1978–2007 (DGNWLYDIWNWVCTVLADFKLWLGAKILPK). Over 2008–2998 (MPGIPFLSCQ…YHSVSRARSR (991 aa)) the chain is Cytoplasmic. The Zn(2+) site is built by Cys-2016, Cys-2034, Cys-2036, and Cys-2057. Residues 2125 to 2213 (EFFTELDGVR…ASSSASQLSA (89 aa)) are FKBP8-binding. A transcriptional activation region spans residues 2125–2337 (EFFTELDGVR…PVPPPRRKRT (213 aa)). The interaction with non-structural protein 4A stretch occupies residues 2140–2144 (PVCRP). The interval 2191–2225 (AKRRLDRGSPPSLASSSASQLSAPSRKATCTTHGR) is disordered. The interval 2194–2446 (RLDRGSPPSL…ALITPCAAEE (253 aa)) is interaction with host SKP2. Phosphoserine; by host is present on residues Ser-2199, Ser-2202, Ser-2206, Ser-2209, Ser-2212, and Ser-2215. Positions 2199–2215 (SPPSLASSSASQLSAPS) are enriched in low complexity. Residues 2215-2254 (SRKATCTTHGRHPDAELITANLLWRQEMGSNITRVESESK) form an ISDR region. Residues 2215-2280 (SRKATCTTHG…DELSVAAECF (66 aa)) form an interaction with EIF2AK2/PKR region. The segment at 2254-2311 (KVVILDSFEPLRACDDEDELSVAAECFKKPPKYPPALPIWARPDYNPPLVEPWKDPDY) is NS4B-binding. The interval 2304–2382 (EPWKDPDYVP…GTQSGSLTGP (79 aa)) is V3. Positions 2327–2330 (PPVP) match the SH3-binding motif. The Nuclear localization signal signature appears at 2332 to 2340 (PRRKRTIVL). Lys-2355 participates in a covalent cross-link: Glycyl lysine isopeptide (Lys-Gly) (interchain with G-Cter in ubiquitin). The disordered stretch occupies residues 2356–2417 (SFPQPTCSAE…PDLSSGSWST (62 aa)). Polar residues predominate over residues 2369-2381 (TSGVGTQSGSLTG). Phosphoserine; by host is present on residues Ser-2457 and Ser-2470. In terms of domain architecture, RdRp catalytic spans 2642 to 2760 (PLGFSYDTRC…IAESAGIDED (119 aa)). 3 residues coordinate Mg(2+): Asp-2648, Asp-2746, and Asp-2747. The chain crosses the membrane as a helical span at residues 2999–3019 (HLLLGLLLLTVGVGIFLLPAR).

Belongs to the hepacivirus polyprotein family. Homooligomer. Interacts with E1 (via C-terminus). Interacts with the non-structural protein 5A. Interacts (via N-terminus) with host STAT1 (via SH2 domain); this interaction results in decreased STAT1 phosphorylation and ubiquitin-mediated proteasome-dependent STAT1 degradation, leading to decreased IFN-stimulated gene transcription. Interacts with host STAT3; this interaction constitutively activates STAT3. Interacts with host LTBR receptor. Interacts with host TNFRSF1A receptor and possibly induces apoptosis. Interacts with host HNRPK. Interacts with host YWHAE. Interacts with host UBE3A/E6AP. Interacts with host DDX3X. Interacts with host APOA2. Interacts with host RXRA protein. Interacts with host SP110 isoform 3/Sp110b; this interaction sequesters the transcriptional corepressor SP110 away from the nucleus. Interacts with host CREB3 nuclear transcription protein; this interaction triggers cell transformation. Interacts with host ACY3. Interacts with host C1QR1. Interacts with host RBM24; this interaction, which enhances the interaction of the mature core protein with 5'-UTR, may inhibit viral translation and favor replication. Interacts with host EIF2AK2/PKR; this interaction induces the autophosphorylation of EIF2AK2. Part of the viral assembly initiation complex composed of NS2, E1, E2, NS3, NS4A, NS5A and the mature core protein. In terms of assembly, forms a heterodimer with envelope glycoprotein E2. Interacts with mature core protein. Interacts with protease NS2. The heterodimer E1/E2 interacts with host CLDN1; this interaction plays a role in viral entry into host cell. Interacts with host SPSB2 (via C-terminus). Part of the viral assembly initiation complex composed of NS2, E1, E2, NS3, NS4A, NS5A and the mature core protein. Interacts with host NEURL3; this interaction prevents E1 binding to glycoprotein E2. As to quaternary structure, forms a heterodimer with envelope glycoprotein E1. Interacts with host CD81 and SCARB1 receptors; these interactions play a role in viral entry into host cell. Interacts with host EIF2AK2/PKR; this interaction inhibits EIF2AK2 and probably allows the virus to evade the innate immune response. Interacts with host CD209/DC-SIGN and CLEC4M/DC-SIGNR. Interact with host SPCS1; this interaction is essential for viral particle assembly. Interacts with protease NS2. The heterodimer E1/E2 interacts with host CLDN1; this interaction plays a role in viral entry into host cell. Part of the viral assembly initiation complex composed of NS2, E1, E2, NS3, NS4A, NS5A and the mature core protein. Interacts with host SLC3A2/4F2hc; the interaction may facilitate viral entry into host cell. Interacts with human PLSCR1. Homohexamer. Homoheptamer. Interacts with protease NS2. In terms of assembly, homodimer. Interacts with host SPCS1; this interaction is essential for viral particle assembly. Interacts with envelope glycoprotein E1. Interacts with envelope glycoprotein E2. Interacts with viroporin p7. Interacts with serine protease/helicase NS3. Part of the replication complex composed of NS2, NS3, NS4A, NS4B, NS5A and the RNA-directed RNA polymerase embedded in an ER-derived membranous web. Part of the viral assembly initiation complex composed of NS2, E1, E2, NS3, NS4A, NS5A and the mature core protein. As to quaternary structure, interacts with protease NS2. Interacts with non-structural protein 4A; this interaction stabilizes the folding of NS3 serine protease. NS3-NS4A interaction is essential for NS3 activation and allows membrane anchorage of the latter. NS3/NS4A complex also prevents phosphorylation of host IRF3, thus preventing the establishment of dsRNA induced antiviral state. Interacts with host MAVS; this interaction leads to the cleavage and inhibition of host MAVS. Interacts with host TICAM1; this interaction leads to the cleavage and inhibition of host TICAM1. Interacts with host TANK-binding kinase/TBK1; this interaction results in the inhibition of the association between TBK1 and IRF3, which leads to the inhibition of IRF3 activation. Interacts with host RBM24. Part of the replication complex composed of NS2, NS3, NS4A, NS4B, NS5A and the RNA-directed RNA polymerase embedded in an ER-derived membranous web. Part of the viral assembly initiation complex composed of NS2, E1, E2, NS3, NS4A, NS5A and the mature core protein. Interacts with NS3 serine protease; this interaction stabilizes the folding of NS3 serine protease. NS3-NS4A interaction is essential for NS3 activation and allows membrane anchorage of the latter. Interacts with non-structural protein 5A (via N-terminus). Part of the replication complex composed of NS2, NS3, NS4A, NS4B, NS5A and the RNA-directed RNA polymerase embedded in an ER-derived membranous web. Part of the viral assembly initiation complex composed of NS2, E1, E2, NS3, NS4A, NS5A and the mature core protein. In terms of assembly, homomultimer. Interacts with non-structural protein NS5A. Interacts with host PLA2G4C; this interaction likely initiates the recruitment of replication complexes to lipid droplets. Interacts with host STING; this interaction disrupts the interaction between STING and TBK1 thereby suppressing the interferon signaling. Part of the replication complex composed of NS2, NS3, NS4A, NS4B, NS5A and the RNA-directed RNA polymerase embedded in an ER-derived membranous web. As to quaternary structure, monomer. Homodimer; dimerization is required for RNA-binding. Interacts with the mature core protein. Interacts (via N-terminus) with non-structural protein 4A. Interacts with non-structural protein 4B. Interacts (via region D2) with RNA-directed RNA polymerase. Part of the viral assembly initiation complex composed of NS2, E1, E2, NS3, NS4A, NS5A and the mature core protein. Part of the replication complex composed of NS2, NS3, NS4A, NS4B, NS5A and the RNA-directed RNA polymerase embedded in an ER-derived membranous web. Interacts with host GRB2. Interacts with host BIN1. Interacts with host PIK3R1. Interacts with host SRCAP. Interacts with host FKBP8. Interacts (via C-terminus) with host VAPB (via MSP domain). Interacts with host EIF2AK2/PKR; this interaction leads to disruption of EIF2AK2 dimerization by NS5A and probably allows the virus to evade the innate immune response. Interacts (via N-terminus) with host PACSIN2 (via N-terminus); this interaction attenuates protein kinase C alpha-mediated phosphorylation of PACSIN2 by disrupting the interaction between PACSIN2 and PRKCA. Interacts (via N-terminus) with host SRC kinase (via SH2 domain). Interacts with most Src-family kinases. Interacts with host IFI27 and SKP2; promotes the ubiquitin-mediated proteasomal degradation of NS5A. Interacts with host GPS2. Interacts with host TNFRSF21; this interaction allows the modulation by the virus of JNK, p38 MAPK, STAT3, and Akt signaling pathways in a DR6-dependent manner. Interacts (via N-terminus) with host CIDEB (via N-terminus); this interaction seems to regulate the association of HCV particles with APOE. Interacts with host CHKA/Choline Kinase-alpha; CHKA bridges host PI4KA and NS5A and potentiates NS5A-stimulated PI4KA activity, which then facilitates the targeting of the ternary complex to the ER for viral replication. Interacts with host SPSB2 (via C-terminus); this interaction targets NS5A for ubiquitination and degradation. Interacts with host RAB18; this interaction may promote the association of NS5A and other replicase components with lipid droplets. Interacts (via region D2) with host PPIA/CYPA; the interaction stimulates RNA-binding ability of NS5A and is dependent on the peptidyl-prolyl cis-trans isomerase activity of PPIA/CYPA. Interacts with host TRIM14; this interaction induces the degradation of NS5A. Homooligomer. Interacts with non-structural protein 5A. Interacts with host VAPB. Interacts with host PRK2/PKN2. Interacts with host HNRNPA1 and SEPT6; these interactions facilitate viral replication. Part of the replication complex composed of NS2, NS3, NS4A, NS4B, NS5A and the RNA-directed RNA polymerase. Zn(2+) serves as cofactor. It depends on Mg(2+) as a cofactor. Specific enzymatic cleavages in vivo yield mature proteins. The structural proteins, core, E1, E2 and p7 are produced by proteolytic processing by host signal peptidases. The core protein precursor is synthesized as a 23 kDa, which is retained in the ER membrane through the hydrophobic signal peptide. Cleavage by the signal peptidase releases the 21 kDa mature core protein. The cleavage of the core protein precursor occurs between aminoacids 176 and 188 but the exact cleavage site is not known. Some degraded forms of the core protein appear as well during the course of infection. The other proteins (p7, NS2, NS3, NS4A, NS4B, NS5A and NS5B) are cleaved by the viral proteases. Autoprocessing between NS2 and NS3 is mediated by the NS2 cysteine protease catalytic domain and regulated by the NS3 N-terminal domain. Post-translationally, phosphorylated by host PKC and PKA. In terms of processing, ubiquitinated; mediated by UBE3A and leading to core protein subsequent proteasomal degradation. Highly N-glycosylated. Post-translationally, palmitoylation is required for NS2/3 autoprocessing and E2 recruitment to membranes. In terms of processing, palmitoylated. This modification may play a role in its polymerization or in protein-protein interactions. Phosphorylated on serines in a basal form termed p56. p58 is a hyperphosphorylated form of p56. p56 and p58 coexist in the cell in roughly equivalent amounts. Hyperphosphorylation is dependent on the presence of NS4A. Host CSNK1A1/CKI-alpha or RPS6KB1 kinases may be responsible for NS5A phosphorylation. Post-translationally, tyrosine phosphorylation is essential for the interaction with host SRC. In terms of processing, ubiquitinated. Ubiquitination, most probably at Lys-2355, mediated by host IFI27 and SKP2 leads to proteasomal degradation, restricting viral infection. Ubiquitination by host TRIM22 leads to interruption of viral replication. The N-terminus is phosphorylated by host PRK2/PKN2.

The protein localises to the host endoplasmic reticulum membrane. The protein resides in the host mitochondrion membrane. It localises to the virion. Its subcellular location is the host cytoplasm. It is found in the host nucleus. The protein localises to the host lipid droplet. The protein resides in the virion membrane. It localises to the host mitochondrion. Its subcellular location is the host cell membrane. It is found in the host perinuclear region. It catalyses the reaction Hydrolysis of four peptide bonds in the viral precursor polyprotein, commonly with Asp or Glu in the P6 position, Cys or Thr in P1 and Ser or Ala in P1'.. It carries out the reaction a ribonucleoside 5'-triphosphate + H2O = a ribonucleoside 5'-diphosphate + phosphate + H(+). The enzyme catalyses ATP + H2O = ADP + phosphate + H(+). The catalysed reaction is RNA(n) + a ribonucleoside 5'-triphosphate = RNA(n+1) + diphosphate. With respect to regulation, inhibited by the antiviral drug hexamethylene amiloride. Inhibition by amantadine appears to be genotype-dependent. Also inhibited by long-alkyl-chain iminosugar derivatives. Its activity is regulated as follows. Activity is up-regulated by PRK2/PKN2-mediated phosphorylation. In terms of biological role, packages viral RNA to form a viral nucleocapsid, and promotes virion budding. Participates in the viral particle production as a result of its interaction with the non-structural protein 5A. Binds RNA and may function as a RNA chaperone to induce the RNA structural rearrangements taking place during virus replication. Modulates viral translation initiation by interacting with viral IRES and 40S ribosomal subunit. Affects various cell signaling pathways, host immunity and lipid metabolism. Prevents the establishment of cellular antiviral state by blocking the interferon-alpha/beta (IFN-alpha/beta) and IFN-gamma signaling pathways and by blocking the formation of phosphorylated STAT1 and promoting ubiquitin-mediated proteasome-dependent degradation of STAT1. Activates STAT3 leading to cellular transformation. Regulates the activity of cellular genes, including c-myc and c-fos. May repress the promoter of p53, and sequester CREB3 and SP110 isoform 3/Sp110b in the cytoplasm. Represses cell cycle negative regulating factor CDKN1A, thereby interrupting an important check point of normal cell cycle regulation. Targets transcription factors involved in the regulation of inflammatory responses and in the immune response: suppresses TNF-induced NF-kappa-B activation, and activates AP-1. Binds to dendritic cells (DCs) via C1QR1, resulting in down-regulation of T-lymphocytes proliferation. Alters lipid metabolism by interacting with hepatocellular proteins involved in lipid accumulation and storage. Induces up-regulation of FAS promoter activity, and thereby contributes to the increased triglyceride accumulation in hepatocytes (steatosis). Its function is as follows. Forms a heterodimer with envelope glycoprotein E2, which mediates virus attachment to the host cell, virion internalization through clathrin-dependent endocytosis and fusion with host membrane. Fusion with the host cell is most likely mediated by both E1 and E2, through conformational rearrangements of the heterodimer required for fusion rather than a classical class II fusion mechanism. E1/E2 heterodimer binds host apolipoproteins such as APOB and ApoE thereby forming a lipo-viro-particle (LVP). APOE associated to the LVP allows the initial virus attachment to cell surface receptors such as the heparan sulfate proteoglycans (HSPGs), syndecan-1 (SDC1), syndecan-1 (SDC2), the low-density lipoprotein receptor (LDLR) and scavenger receptor class B type I (SCARB1). The cholesterol transfer activity of SCARB1 allows E2 exposure and binding of E2 to SCARB1 and the tetraspanin CD81. E1/E2 heterodimer binding on CD81 activates the epithelial growth factor receptor (EGFR) signaling pathway. Diffusion of the complex E1-E2-EGFR-SCARB1-CD81 to the cell lateral membrane allows further interaction with Claudin 1 (CLDN1) and occludin (OCLN) to finally trigger HCV entry. Functionally, forms a heterodimer with envelope glycoprotein E1, which mediates virus attachment to the host cell, virion internalization through clathrin-dependent endocytosis and fusion with host membrane. Fusion with the host cell is most likely mediated by both E1 and E2, through conformational rearrangements of the heterodimer required for fusion rather than a classical class II fusion mechanism. The interaction between envelope glycoprotein E2 and host apolipoprotein E/APOE allows the proper assembly, maturation and infectivity of the viral particles. This interaction is probably promoted via the up-regulation of cellular autophagy by the virus. E1/E2 heterodimer binds host apolipoproteins such as APOB and APOE thereby forming a lipo-viro-particle (LVP). APOE associated to the LVP allows the initial virus attachment to cell surface receptors such as the heparan sulfate proteoglycans (HSPGs), syndecan-1 (SDC1), syndecan-1 (SDC2), the low-density lipoprotein receptor (LDLR) and scavenger receptor class B type I (SCARB1). The cholesterol transfer activity of SCARB1 allows E2 exposure and binding of E2 to SCARB1 and the tetraspanin CD81. E1/E2 heterodimer binding on CD81 activates the epithelial growth factor receptor (EGFR) signaling pathway. Diffusion of the complex E1-E2-EGFR-SCARB1-CD81 to the cell lateral membrane allows further interaction with Claudin 1 (CLDN1) and occludin (OCLN) to finally trigger HCV entry. Inhibits host EIF2AK2/PKR activation, preventing the establishment of an antiviral state. Viral ligand for CD209/DC-SIGN and CLEC4M/DC-SIGNR, which are respectively found on dendritic cells (DCs), and on liver sinusoidal endothelial cells and macrophage-like cells of lymph node sinuses. These interactions allow the capture of circulating HCV particles by these cells and subsequent facilitated transmission to permissive cells such as hepatocytes and lymphocyte subpopulations. The interaction between E2 and host amino acid transporter complex formed by SLC3A2 and SLC7A5/LAT1 may facilitate viral entry into host cell. Ion channel protein that acts as a viroporin and plays an essential role in the assembly, envelopment and secretion of viral particles. Regulates the host cell secretory pathway, which induces the intracellular retention of viral glycoproteins and favors assembly of viral particles. Creates a pore in acidic organelles and releases Ca(2+) and H(+) in the cytoplasm of infected cells, leading to a productive viral infection. High levels of cytoplasmic Ca(2+) may trigger membrane trafficking and transport of viral ER-associated proteins to viroplasms, sites of viral genome replication. This ionic imbalance induces the assembly of the inflammasome complex, which triggers the maturation of pro-IL-1beta into IL-1beta through the action of caspase-1. Targets also host mitochondria and induces mitochondrial depolarization. In addition of its role as a viroporin, acts as a lipid raft adhesion factor. In terms of biological role, cysteine protease required for the proteolytic auto-cleavage between the non-structural proteins NS2 and NS3. The N-terminus of NS3 is required for the function of NS2 protease (active region NS2-3). Promotes the initiation of viral particle assembly by mediating the interaction between structural and non-structural proteins. Its function is as follows. Displays three enzymatic activities: serine protease with a chymotrypsin-like fold, NTPase and RNA helicase. NS3 serine protease, in association with NS4A, is responsible for the cleavages of NS3-NS4A, NS4A-NS4B, NS4B-NS5A and NS5A-NS5B. The NS3/NS4A complex prevents phosphorylation of host IRF3, thus preventing the establishment of dsRNA induced antiviral state. The NS3/NS4A complex induces host amino acid transporter component SLC3A2, thus contributing to HCV propagation. NS3 RNA helicase binds to RNA and unwinds both dsDNA and dsRNA in the 3' to 5' direction, and likely resolves RNA complicated stable secondary structures in the template strand. Binds a single ATP and catalyzes the unzipping of a single base pair of dsRNA. Inhibits host antiviral proteins TBK1 and IRF3 thereby preventing the establishment of an antiviral state. Cleaves host MAVS/CARDIF thereby preventing the establishment of an antiviral state. Cleaves host TICAM1/TRIF, thereby disrupting TLR3 signaling and preventing the establishment of an antiviral state. Functionally, induces a specific membrane alteration that serves as a scaffold for the virus replication complex. This membrane alteration gives rise to the so-called ER-derived membranous web that contains the replication complex. NS4B self-interaction contributes to its function in membranous web formation. Promotes host TRIF protein degradation in a CASP8-dependent manner thereby inhibiting host TLR3-mediated interferon signaling. Disrupts the interaction between STING and TBK1 contributing to the inhibition of interferon signaling. Phosphorylated protein that is indispensable for viral replication and assembly. Both hypo- and hyperphosphorylated states are required for the viral life cycle. The hyperphosphorylated form of NS5A is an inhibitor of viral replication. Involved in RNA-binding and especially in binding to the viral genome. Zinc is essential for RNA-binding. Participates in the viral particle production as a result of its interaction with the mature viral core protein. Its interaction with host VAPB may target the viral replication complex to vesicles. Down-regulates viral IRES translation initiation. Mediates interferon resistance, presumably by interacting with and inhibiting host EIF2AK2/PKR. Prevents BIN1-induced apoptosis. Acts as a transcriptional activator of some host genes important for viral replication when localized in the nucleus. Via the interaction with host PACSIN2, modulates lipid droplet formation in order to promote virion assembly. Modulates TNFRSF21/DR6 signaling pathway for viral propagation. In terms of biological role, RNA-dependent RNA polymerase that performs primer-template recognition and RNA synthesis during viral replication. Initiates RNA transcription/replication at a flavin adenine dinucleotide (FAD), resulting in a 5'- FAD cap on viral RNAs. In this way, recognition of viral 5' RNA by host pattern recognition receptors can be bypassed, thereby evading activation of antiviral pathways. This Homo sapiens (Human) protein is Genome polyprotein.